The sequence spans 310 residues: HPr kinase/phosphorylase (310 aa).

Catalysis depends on residues His136 and Lys157. 151–158 lines the ATP pocket; it reads GDSGIGKS. Residue Ser158 coordinates Mg(2+). The active-site Proton acceptor; for phosphorylation activity. Proton donor; for dephosphorylation activity is Asp175. The important for the catalytic mechanism of both phosphorylation and dephosphorylation stretch occupies residues 199–208; sequence LEIRGLGIIN. Glu200 is a binding site for Mg(2+). The active site involves Arg241. An important for the catalytic mechanism of dephosphorylation region spans residues 262–267; sequence PVRPGR.

This sequence belongs to the HPrK/P family. Homohexamer. Requires Mg(2+) as cofactor.

The catalysed reaction is [HPr protein]-L-serine + ATP = [HPr protein]-O-phospho-L-serine + ADP + H(+). It carries out the reaction [HPr protein]-O-phospho-L-serine + phosphate + H(+) = [HPr protein]-L-serine + diphosphate. Its function is as follows. Catalyzes the ATP- as well as the pyrophosphate-dependent phosphorylation of a specific serine residue in HPr, a phosphocarrier protein of the phosphoenolpyruvate-dependent sugar phosphotransferase system (PTS). HprK/P also catalyzes the pyrophosphate-producing, inorganic phosphate-dependent dephosphorylation (phosphorolysis) of seryl-phosphorylated HPr (P-Ser-HPr). The two antagonistic activities of HprK/P are regulated by several intracellular metabolites, which change their concentration in response to the absence or presence of rapidly metabolisable carbon sources (glucose, fructose, etc.) in the growth medium. Therefore, by controlling the phosphorylation state of HPr, HPrK/P is a sensor enzyme that plays a major role in the regulation of carbon metabolism and sugar transport: it mediates carbon catabolite repression (CCR), and regulates PTS-catalyzed carbohydrate uptake and inducer exclusion. In Staphylococcus aureus (strain Mu3 / ATCC 700698), this protein is HPr kinase/phosphorylase.